A 263-amino-acid polypeptide reads, in one-letter code: Putative hydro-lyase Pden_0321 (263 aa).

The protein belongs to the D-glutamate cyclase family.

This chain is Putative hydro-lyase Pden_0321, found in Paracoccus denitrificans (strain Pd 1222).